The following is a 389-amino-acid chain: Aspartic protease 6 (389 aa).

Positions 1–15 are cleaved as a signal peptide; it reads MKTFILLAVLGLASA. The Peptidase A1 domain occupies 71–384; sequence YLGNITIGTP…DIGNKRMGFA (314 aa). Residue N74 is glycosylated (N-linked (GlcNAc...) asparagine). Residue D89 is part of the active site. Residues C102 and C106 are joined by a disulfide bond. D277 is an active-site residue. A disulfide bond links C312 and C344.

This sequence belongs to the peptidase A1 family. Post-translationally, glycosylated. Has phosphorylcholine-substituted oligosaccharide N-glycans. As to expression, expressed in intestine, muscles, pharynx and hypodermis.

The protein localises to the secreted. Aspartic protease. This chain is Aspartic protease 6, found in Caenorhabditis elegans.